The primary structure comprises 746 residues: Teichoic acid poly(glycerol phosphate) polymerase (746 aa).

CDP-glycerol-binding positions include 473 to 477, Arg-540, 573 to 574, 610 to 612, 652 to 653, and Asp-657; these read WHGTP, PT, RMH, and SS.

This sequence belongs to the CDP-glycerol glycerophosphotransferase family.

It localises to the cell membrane. It carries out the reaction 4-O-[(2R)-glycerylphospho]-N-acetyl-beta-D-mannosaminyl-(1-&gt;4)-N-acetyl-alpha-D-glucosaminyl di-trans,octa-cis-undecaprenyl diphosphate + n CDP-glycerol = 4-O-{[(2R)-1-glycerylphospho](n)-(2R)-1-glycerylphospho}-N-acetyl-beta-D-mannosaminyl-(1-&gt;4)-N-acetyl-alpha-D-glucosaminyl undecaprenyl diphosphate + n CMP + n H(+). It participates in cell wall biogenesis; poly(glycerol phosphate) teichoic acid biosynthesis. Responsible for the polymerization of the main chain of the major teichoic acid by sequential transfer of glycerol phosphate units from CDP-glycerol to the disaccharide linkage unit. Synthesizes polymers of approximately 35 glycerol phosphate units in length. The polypeptide is Teichoic acid poly(glycerol phosphate) polymerase (tagF) (Bacillus subtilis (strain 168)).